A 395-amino-acid polypeptide reads, in one-letter code: LIM/homeobox protein Lhx3 (395 aa).

2 LIM zinc-binding domains span residues 28 to 78 (CAGC…CKDD) and 87 to 141 (CAAC…CKAD). The segment at residues 154–213 (AKRPRTTITAKQLETLKNAYNNSPKPARHVREQLSSETGLDMRVVQVWFQNRRAKEKRLK) is a DNA-binding region (homeobox). Disordered stretches follow at residues 208–304 (KEKR…QDQY) and 363–383 (GPSS…PVSP). The segment covering 257–278 (DEPSMSEMNHSNGIYNSLNDSS) has biased composition (polar residues).

In terms of assembly, interacts with ldb1 and with the N-terminus of rnf12. In dorsal regions at neural tube and tailbud stages and in adults predominantly in the pituitary gland and weakly in the eye and brain.

It is found in the nucleus. Its function is as follows. Transcription factor. May be involved in the specification and maintenance of differentiation of distinct neuronal and neuroendocrine tissues. Early marker for the pituitary and pineal lineages, it may be involved in specifying these lineages. The polypeptide is LIM/homeobox protein Lhx3 (lhx3) (Xenopus laevis (African clawed frog)).